The sequence spans 616 residues: Dihydroxy-acid dehydratase (616 aa).

Position 81 (Asp-81) interacts with Mg(2+). Residue Cys-122 coordinates [2Fe-2S] cluster. Mg(2+)-binding residues include Asp-123 and Lys-124. An N6-carboxylysine modification is found at Lys-124. Cys-195 provides a ligand contact to [2Fe-2S] cluster. Glu-491 contacts Mg(2+). Residue Ser-517 is the Proton acceptor of the active site.

This sequence belongs to the IlvD/Edd family. As to quaternary structure, homodimer. [2Fe-2S] cluster serves as cofactor. It depends on Mg(2+) as a cofactor.

The catalysed reaction is (2R)-2,3-dihydroxy-3-methylbutanoate = 3-methyl-2-oxobutanoate + H2O. It catalyses the reaction (2R,3R)-2,3-dihydroxy-3-methylpentanoate = (S)-3-methyl-2-oxopentanoate + H2O. It functions in the pathway amino-acid biosynthesis; L-isoleucine biosynthesis; L-isoleucine from 2-oxobutanoate: step 3/4. Its pathway is amino-acid biosynthesis; L-valine biosynthesis; L-valine from pyruvate: step 3/4. In terms of biological role, functions in the biosynthesis of branched-chain amino acids. Catalyzes the dehydration of (2R,3R)-2,3-dihydroxy-3-methylpentanoate (2,3-dihydroxy-3-methylvalerate) into 2-oxo-3-methylpentanoate (2-oxo-3-methylvalerate) and of (2R)-2,3-dihydroxy-3-methylbutanoate (2,3-dihydroxyisovalerate) into 2-oxo-3-methylbutanoate (2-oxoisovalerate), the penultimate precursor to L-isoleucine and L-valine, respectively. The chain is Dihydroxy-acid dehydratase from Salmonella gallinarum (strain 287/91 / NCTC 13346).